Consider the following 440-residue polypeptide: Golgi-associated RAB2 interactor protein 2 (440 aa).

It belongs to the GARIN family. Interacts with CALM1. In terms of tissue distribution, expressed in testis (at protein level).

It is found in the cell projection. The protein localises to the cilium. Its subcellular location is the flagellum. Seems to play a role in sperm motility. The sequence is that of Golgi-associated RAB2 interactor protein 2 from Mus musculus (Mouse).